The following is a 377-amino-acid chain: MSKGRVNQKRYKYPLPIHPVDDLPELILHNPLSWLYWAYRYYKSTNALNDKVHVDFIGDTTLHITVQDDKQMLYLWNNGFFGTGQFSRSEPTWKARTEARLGLNDTPLHNRGGTKSNTETEMTLEKVTQQRRLQRLEFKKERAKLERELLELRKKGGHIDEENILLEKQRESLRKFKLKQTEDVGIVAQQQDISESNLRDEDNNLLDENGDLLPLESLELMPVEAMFLTFALPVLDISPACLAGKLFQFDAKYKDIHSFVRSYVIYHHYRSHGWCVRSGIKFGCDYLLYKRGPPFQHAEFCVMGLDHDVSKDYTWYSSIARVVGGAKKTFVLCYVERLISEQEAIALWKSNNFTKLFNSFQVGEVLYKRWVPGRNRD.

The stretch at 119–174 (ETEMTLEKVTQQRRLQRLEFKKERAKLERELLELRKKGGHIDEENILLEKQRESLR) forms a coiled coil. Active-site residues include tyrosine 289, histidine 297, and lysine 328.

This sequence belongs to the tRNA-intron endonuclease family. As to quaternary structure, heterotetramer composed of SEN2, SEN15, SEN34 and SEN54. Interacts directly with SEN54.

It localises to the nucleus. The protein localises to the endomembrane system. It is found in the mitochondrion outer membrane. The catalysed reaction is pretRNA = a 3'-half-tRNA molecule with a 5'-OH end + a 5'-half-tRNA molecule with a 2',3'-cyclic phosphate end + an intron with a 2',3'-cyclic phosphate and a 5'-hydroxyl terminus.. Its function is as follows. Constitutes one of the two catalytic subunit of the tRNA-splicing endonuclease complex, a complex responsible for identification and cleavage of the splice sites in pre-tRNA. It cleaves pre-tRNA at the 5'- and 3'-splice sites to release the intron. The products are an intron and two tRNA half-molecules bearing 2',3'-cyclic phosphate and 5'-OH termini. There are no conserved sequences at the splice sites, but the intron is invariably located at the same site in the gene, placing the splice sites an invariant distance from the constant structural features of the tRNA body. This subunit may anchor the endonuclease complex to the nuclear membrane. Probably carries the active site for 5'-splice site cleavage. This Saccharomyces cerevisiae (strain ATCC 204508 / S288c) (Baker's yeast) protein is tRNA-splicing endonuclease subunit SEN2 (SEN2).